The chain runs to 103 residues: Putative glutaredoxin-C14 (103 aa).

The 102-residue stretch at 1–102 folds into the Glutaredoxin domain; it reads MDRVMKLASE…PMLKNAGALW (102 aa). Cys21 and Cys24 are oxidised to a cystine. Residues 100–103 carry the Responsive for interaction with TGA factors motif; sequence ALWL.

This sequence belongs to the glutaredoxin family. CC-type subfamily.

Its subcellular location is the cytoplasm. It localises to the nucleus. Functionally, has a glutathione-disulfide oxidoreductase activity in the presence of NADPH and glutathione reductase. Reduces low molecular weight disulfides and proteins. The chain is Putative glutaredoxin-C14 (GRXC14) from Oryza sativa subsp. japonica (Rice).